Reading from the N-terminus, the 189-residue chain is Chitin synthase 2 (189 aa).

This sequence belongs to the chitin synthase family. Class II subfamily.

Its subcellular location is the cell membrane. It catalyses the reaction [(1-&gt;4)-N-acetyl-beta-D-glucosaminyl](n) + UDP-N-acetyl-alpha-D-glucosamine = [(1-&gt;4)-N-acetyl-beta-D-glucosaminyl](n+1) + UDP + H(+). In terms of biological role, polymerizes chitin, a structural polymer of the cell wall and septum, by transferring the sugar moiety of UDP-GlcNAc to the non-reducing end of the growing chitin polymer. The chain is Chitin synthase 2 (CHS2) from Ajellomyces dermatitidis (Blastomyces dermatitidis).